A 410-amino-acid chain; its full sequence is Tryptophan synthase beta chain (410 aa).

K104 bears the N6-(pyridoxal phosphate)lysine mark.

The protein belongs to the TrpB family. Tetramer of two alpha and two beta chains. Pyridoxal 5'-phosphate is required as a cofactor.

The catalysed reaction is (1S,2R)-1-C-(indol-3-yl)glycerol 3-phosphate + L-serine = D-glyceraldehyde 3-phosphate + L-tryptophan + H2O. The protein operates within amino-acid biosynthesis; L-tryptophan biosynthesis; L-tryptophan from chorismate: step 5/5. The beta subunit is responsible for the synthesis of L-tryptophan from indole and L-serine. The sequence is that of Tryptophan synthase beta chain from Thermosynechococcus vestitus (strain NIES-2133 / IAM M-273 / BP-1).